The following is a 507-amino-acid chain: ATP synthase subunit alpha, mitochondrial (507 aa).

Residue 171–178 (GDRQTGKT) participates in ATP binding.

Belongs to the ATPase alpha/beta chains family. F-type ATPases have 2 components, CF(1) - the catalytic core - and CF(0) - the membrane proton channel. CF(1) has five subunits: alpha(3), beta(3), gamma(1), delta(1), epsilon(1). CF(0) has three main subunits: a, b and c.

The protein resides in the mitochondrion. It is found in the mitochondrion inner membrane. In terms of biological role, mitochondrial membrane ATP synthase (F(1)F(0) ATP synthase or Complex V) produces ATP from ADP in the presence of a proton gradient across the membrane which is generated by electron transport complexes of the respiratory chain. F-type ATPases consist of two structural domains, F(1) - containing the extramembraneous catalytic core, and F(0) - containing the membrane proton channel, linked together by a central stalk and a peripheral stalk. During catalysis, ATP synthesis in the catalytic domain of F(1) is coupled via a rotary mechanism of the central stalk subunits to proton translocation. Subunits alpha and beta form the catalytic core in F(1). Rotation of the central stalk against the surrounding alpha(3)beta(3) subunits leads to hydrolysis of ATP in three separate catalytic sites on the beta subunits. Subunit alpha does not bear the catalytic high-affinity ATP-binding sites. The sequence is that of ATP synthase subunit alpha, mitochondrial (ATPA) from Pisum sativum (Garden pea).